Reading from the N-terminus, the 521-residue chain is MGKRQHQKDKMYITCAEYTHFYGGRKPDISQTSFRRLPFDHCSLSLQPFVYPVCTPEGVVFDLLNIVPWLKKYGTNPSTGEKLDGKSLIKLNFAKNSEGQYHCPVLYSVFTDNTHIVAIRTTGNVYTYEAVEQLNIKAKNLRDLLTDEPFSRQDIITLQDPTNLDKFNVSNFFHVKNNMRIIDPDEEKAKQDPSYYLKNTNSETRETLQELYKEFKGDEILAATMRPPEKKKVDQLNAAHYSTGKVSASFTSTAMVPETTHEAAVIDEDVLRYQFVKKKGYVRLHTNKGDLNLELHCDLTPKTCENFIKLCKKQYYDGTIFHRSIRNFVIQGGDPTGTGTGGESFWGKPFKDEFRPNLSHTGRGVLSMANSGPNTNKSQFFITFRSCAYLDKKHTIFGRVVGGFDTLTAMENVESDPKTDRPKEEVLICTTTVFVDPYEEADAQIAQERKKTQHQVDPEAKVKMSQPQPGNQGPQTYRQGVGKYIHPAATKRSAEEEPSTSTATPTAKKRPSRGFGDFSSW.

The 74-residue stretch at 35-108 (RRLPFDHCSL…GQYHCPVLYS (74 aa)) folds into the U-box domain. Positions 197–217 (LKNTNSETRETLQELYKEFKG) form a coiled coil. A Glycyl lysine isopeptide (Lys-Gly) (interchain with G-Cter in SUMO2) cross-link involves residue lysine 216. Residues 278–433 (KKGYVRLHTN…EEVLICTTTV (156 aa)) form the PPIase cyclophilin-type domain. A compositionally biased stretch (basic and acidic residues) spans 447–462 (QERKKTQHQVDPEAKV). The interval 447-521 (QERKKTQHQV…SRGFGDFSSW (75 aa)) is disordered. Residues 465-478 (SQPQPGNQGPQTYR) show a composition bias toward polar residues. N6-acetyllysine is present on lysine 483.

Belongs to the cyclophilin-type PPIase family. PPIL2 subfamily. As to quaternary structure, component of the minor spliceosome, which splices U12-type introns. Within this complex, interacts with PRPF8/PRP8, EFTUD2/SNU114 and PLRG1. Interacts with isoform 2 of BSG. Interacts (via the PPIase cyclophilin-type domain) with CRNKL1; they may form a trimeric complex with HSP90.

Its subcellular location is the nucleus. It catalyses the reaction S-ubiquitinyl-[E2 ubiquitin-conjugating enzyme]-L-cysteine + [acceptor protein]-L-lysine = [E2 ubiquitin-conjugating enzyme]-L-cysteine + N(6)-ubiquitinyl-[acceptor protein]-L-lysine.. It participates in protein modification; protein ubiquitination. Has a ubiquitin-protein ligase activity acting as an E3 ubiquitin protein ligase or as an ubiquitin-ubiquitin ligase promoting elongation of ubiquitin chains on substrates. By mediating 'Lys-48'-linked polyubiquitination of proteins could target them for proteasomal degradation. May also function as a chaperone, playing a role in transport to the cell membrane of BSG/Basigin for instance. Probable inactive PPIase with no peptidyl-prolyl cis-trans isomerase activity. As a component of the minor spliceosome, involved in the splicing of U12-type introns in pre-mRNAs. This Mus musculus (Mouse) protein is RING-type E3 ubiquitin-protein ligase PPIL2.